The sequence spans 364 residues: tRNA-specific 2-thiouridylase MnmA (364 aa).

ATP-binding positions include 6 to 13 (AMSGGVDS) and Leu32. Cys101 acts as the Nucleophile in catalysis. A disulfide bridge connects residues Cys101 and Cys193. Gly125 is an ATP binding site. Residues 143–145 (KDQ) form an interaction with tRNA region. The active-site Cysteine persulfide intermediate is the Cys193.

The protein belongs to the MnmA/TRMU family.

It is found in the cytoplasm. The enzyme catalyses S-sulfanyl-L-cysteinyl-[protein] + uridine(34) in tRNA + AH2 + ATP = 2-thiouridine(34) in tRNA + L-cysteinyl-[protein] + A + AMP + diphosphate + H(+). In terms of biological role, catalyzes the 2-thiolation of uridine at the wobble position (U34) of tRNA, leading to the formation of s(2)U34. In Rhodococcus opacus (strain B4), this protein is tRNA-specific 2-thiouridylase MnmA.